Consider the following 315-residue polypeptide: Lipoyl synthase (315 aa).

Residues Cys-62, Cys-67, Cys-73, Cys-88, Cys-92, Cys-95, and Ser-302 each coordinate [4Fe-4S] cluster. The region spanning Phe-74–Arg-291 is the Radical SAM core domain.

Belongs to the radical SAM superfamily. Lipoyl synthase family. It depends on [4Fe-4S] cluster as a cofactor.

It is found in the cytoplasm. The catalysed reaction is [[Fe-S] cluster scaffold protein carrying a second [4Fe-4S](2+) cluster] + N(6)-octanoyl-L-lysyl-[protein] + 2 oxidized [2Fe-2S]-[ferredoxin] + 2 S-adenosyl-L-methionine + 4 H(+) = [[Fe-S] cluster scaffold protein] + N(6)-[(R)-dihydrolipoyl]-L-lysyl-[protein] + 4 Fe(3+) + 2 hydrogen sulfide + 2 5'-deoxyadenosine + 2 L-methionine + 2 reduced [2Fe-2S]-[ferredoxin]. Its pathway is protein modification; protein lipoylation via endogenous pathway; protein N(6)-(lipoyl)lysine from octanoyl-[acyl-carrier-protein]: step 2/2. In terms of biological role, catalyzes the radical-mediated insertion of two sulfur atoms into the C-6 and C-8 positions of the octanoyl moiety bound to the lipoyl domains of lipoate-dependent enzymes, thereby converting the octanoylated domains into lipoylated derivatives. The polypeptide is Lipoyl synthase (Azoarcus sp. (strain BH72)).